We begin with the raw amino-acid sequence, 118 residues long: Evasin P1080 (118 aa).

The signal sequence occupies residues 1–19 (FFQLAVFVVILFNINLLSA). 3 disulfides stabilise this stretch: C41/C60, C45/C62, and C56/C73. N-linked (GlcNAc...) asparagine glycosylation is present at N44. N67 and N104 each carry an N-linked (GlcNAc...) asparagine glycan.

It is found in the secreted. Salivary chemokine-binding protein which binds to host chemokines CXCL1, CXCL2, CXCL3, CXCL4, CXCL5, CXCL6, CXCL10, CXCL11 and CXCL13. This Ixodes ricinus (Common tick) protein is Evasin P1080.